We begin with the raw amino-acid sequence, 146 residues long: U-scoloptoxin(16)-Er1a (146 aa).

The N-terminal stretch at 1–26 is a signal peptide; sequence MNTVSVVQFLAVGCAVFVLYGRGVFA.

The protein belongs to the scoloptoxin-16 family. Post-translationally, contains 4 disulfide bonds. In terms of tissue distribution, expressed by the venom gland.

The protein localises to the secreted. The sequence is that of U-scoloptoxin(16)-Er1a from Ethmostigmus rubripes (Giant centipede).